The following is a 352-amino-acid chain: tRNA(Ile)-lysidine synthase (352 aa).

ATP is bound at residue 58-63 (SGGADS).

This sequence belongs to the tRNA(Ile)-lysidine synthase family.

Its subcellular location is the cytoplasm. The enzyme catalyses cytidine(34) in tRNA(Ile2) + L-lysine + ATP = lysidine(34) in tRNA(Ile2) + AMP + diphosphate + H(+). In terms of biological role, ligates lysine onto the cytidine present at position 34 of the AUA codon-specific tRNA(Ile) that contains the anticodon CAU, in an ATP-dependent manner. Cytidine is converted to lysidine, thus changing the amino acid specificity of the tRNA from methionine to isoleucine. The protein is tRNA(Ile)-lysidine synthase of Streptomyces coelicolor (strain ATCC BAA-471 / A3(2) / M145).